Here is a 1758-residue protein sequence, read N- to C-terminus: Collagen alpha-2(IV) chain (1758 aa).

The N-terminal stretch at 1-26 is a signal peptide; it reads MKQRAALGPVLRLAILALLAVSYVQS. Residues 27–42 are 7S domain; the sequence is QATCRDCSNRGCFCVG. Positions 42 to 1527 are triple-helical region; the sequence is GEKGSMGAPG…PGAPGAAGPA (1486 aa). A compositionally biased stretch (low complexity) spans 47–62; sequence MGAPGPQGPPGTQGIR. 4 disordered regions span residues 47–943, 955–1304, 1316–1339, and 1367–1525; these read MGAP…GAPG, GVPG…GLPG, GFPGAKGDLGANGIPGKRGEDGLP, and GFPG…GAAG. The span at 102–111 shows a compositional bias: gly residues; the sequence is GNDGGNGRPG. Residues 134–149 are compositionally biased toward pro residues; sequence PGRPGPPGMPGFPGPP. Positions 189-198 are enriched in basic and acidic residues; it reads YPGEKGDRGD. Residues 224 to 234 show a composition bias toward low complexity; that stretch reads PKGDPGDLGSV. O-linked (Xyl...) (glycosaminoglycan) serine glycosylation is present at serine 248. The segment covering 258–267 has biased composition (basic and acidic residues); sequence PGEKGDKGEP. Positions 268–283 are enriched in gly residues; sequence GEGGQRGYPGNGGLSG. Over residues 367 to 382 the composition is skewed to pro residues; sequence PGPPGLPGRPGNPGPP. The span at 398-407 shows a compositional bias: gly residues; it reads GNTGGPGLPG. 2 stretches are compositionally biased toward low complexity: residues 408 to 417 and 429 to 439; these read YPGNEGLPGP and APGVSGPSGIP. The segment covering 464 to 479 has biased composition (basic and acidic residues); sequence KDGKPGLDGAPGRKGE. 2 stretches are compositionally biased toward low complexity: residues 495 to 509 and 568 to 584; these read GLPGAPGQRGAPGPN and PVGDAGDDGLPGPAGRP. The span at 638-648 shows a compositional bias: pro residues; that stretch reads PSGPVGPPGAP. 3 stretches are compositionally biased toward gly residues: residues 693–702, 737–746, and 782–791; these read GAKGDGGLPG, GTKGEGGYPG, and GDKGFGGVPG. Positions 839-858 are enriched in low complexity; it reads LPGLPGTPGLEGQRGFPGAP. Positions 859–868 are enriched in gly residues; it reads GLKGGDGLPG. Positions 929 to 938 are enriched in low complexity; it reads APGQSGAPGL. Residues 958 to 967 are compositionally biased toward gly residues; sequence GFKGDGGLPG. Over residues 968–980 the composition is skewed to low complexity; that stretch reads LPGLNGPKGEPGV. Over residues 988-997 the composition is skewed to gly residues; it reads GMKGNGGLPG. The segment covering 1040-1056 has biased composition (low complexity); sequence LPGQPGLRGPQGPSGLP. The segment covering 1194-1203 has biased composition (gly residues); sequence GLPGLGGEKG. A compositionally biased stretch (low complexity) spans 1237 to 1250; sequence FPGQPGQEGLPGLS. The span at 1251 to 1260 shows a compositional bias: gly residues; the sequence is GEKGMGGLPG. Residues 1373 to 1382 show a composition bias toward gly residues; that stretch reads GLKGEGGLPG. Composition is skewed to low complexity over residues 1413 to 1425 and 1433 to 1454; these read LPGRDGLPGADGP and GPQNLVEPGEKGLPGLPGAPGL. 2 stretches are compositionally biased toward gly residues: residues 1492–1501 and 1507–1516; these read GEKGMGGLPG and GQPGGPGAPG. In terms of domain architecture, Collagen IV NC1 spans 1531 to 1754; it reads GFVLVKHSQT…SRCQVCVKST (224 aa). Disulfide bonds link cysteine 1546–cysteine 1635, cysteine 1579–cysteine 1632, cysteine 1591–cysteine 1597, cysteine 1654–cysteine 1750, cysteine 1688–cysteine 1747, and cysteine 1700–cysteine 1707.

This sequence belongs to the type IV collagen family. Trimers of two alpha 1(IV) and one alpha 2(IV) chain. Type IV collagen forms a mesh-like network linked through intermolecular interactions between 7S domains and between NC1 domains. In terms of processing, prolines at the third position of the tripeptide repeating unit (G-X-Y) are hydroxylated in some or all of the chains. Type IV collagens contain numerous cysteine residues which are involved in inter- and intramolecular disulfide bonding. 12 of these, located in the NC1 domain, are conserved in all known type IV collagens. Post-translationally, the trimeric structure of the NC1 domains is stabilized by covalent bonds between Lys and Met residues. Localizes to the basement membrane between distal tip cells and the germline. Localizes to the intestinal basement membrane.

It localises to the secreted. The protein resides in the extracellular space. It is found in the extracellular matrix. The protein localises to the basement membrane. In terms of biological role, collagen type IV is specific for basement membranes. Together with fbl-1 and downstream of metalloprotease mig-17, recruits nidogen nid-1 to the gonad basement membrane thereby probably inducing basement membrane remodeling required for the directional migration of distal tip cells. Required to restrict presynaptic growth at the neuromuscular junctions in late larval stage and in adult motor neurons. Vital for embryonic development. The protein is Collagen alpha-2(IV) chain of Caenorhabditis elegans.